Reading from the N-terminus, the 281-residue chain is Rhomboid protease AarA (281 aa).

7 consecutive transmembrane segments (helical) span residues 16 to 36, 76 to 96, 105 to 125, 145 to 165, 185 to 205, 208 to 228, and 233 to 253; these read FSLG…AVYF, MLHS…VIGI, FKLL…SAYW, IGVG…IYLI, QLYN…QSGV, AAHI…ILVP, and VANL…IYLY. The Nucleophile role is filled by serine 150. The active-site Charge relay system is histidine 210.

Belongs to the peptidase S54 family.

It localises to the cell membrane. It catalyses the reaction Cleaves type-1 transmembrane domains using a catalytic dyad composed of serine and histidine that are contributed by different transmembrane domains.. Functionally, rhomboid serine protease that catalyzes intramembrane proteolysis. Mediates quorum-sensing and the subsequent regulation of target genes via activation of the Tat protein export system. Catalyzes the proteolytic activation of TatA by removal of its N-terminal extension. The polypeptide is Rhomboid protease AarA (aarA) (Providencia stuartii).